Reading from the N-terminus, the 398-residue chain is 4-hydroxy-3-methylbut-2-en-1-yl diphosphate synthase (ferredoxin) (398 aa).

[4Fe-4S] cluster is bound by residues Cys-306, Cys-309, Cys-340, and Glu-347.

This sequence belongs to the IspG family. Requires [4Fe-4S] cluster as cofactor.

It carries out the reaction (2E)-4-hydroxy-3-methylbut-2-enyl diphosphate + 2 oxidized [2Fe-2S]-[ferredoxin] + H2O = 2-C-methyl-D-erythritol 2,4-cyclic diphosphate + 2 reduced [2Fe-2S]-[ferredoxin] + H(+). Its pathway is isoprenoid biosynthesis; isopentenyl diphosphate biosynthesis via DXP pathway; isopentenyl diphosphate from 1-deoxy-D-xylulose 5-phosphate: step 5/6. In terms of biological role, converts 2C-methyl-D-erythritol 2,4-cyclodiphosphate (ME-2,4cPP) into 1-hydroxy-2-methyl-2-(E)-butenyl 4-diphosphate. The chain is 4-hydroxy-3-methylbut-2-en-1-yl diphosphate synthase (ferredoxin) from Synechococcus sp. (strain CC9605).